A 304-amino-acid polypeptide reads, in one-letter code: Deoxyribonuclease-1-like 1 (304 aa).

Positions 1 to 24 (MPYMAMHGLTVALLLIFLAGGTEA) are cleaved as a signal peptide. N92 carries N-linked (GlcNAc...) asparagine glycosylation. E103 is a catalytic residue. An N-linked (GlcNAc...) asparagine glycan is attached at N123. Residue H154 is part of the active site. The cysteines at positions 193 and 230 are disulfide-linked. N-linked (GlcNAc...) asparagine glycosylation occurs at N229.

Belongs to the DNase I family.

The protein resides in the endoplasmic reticulum. This chain is Deoxyribonuclease-1-like 1 (DNASE1L1), found in Cricetulus griseus (Chinese hamster).